Consider the following 575-residue polypeptide: Alpha-(1,6)-fucosyltransferase (575 aa).

Over M1–R9 the chain is Cytoplasmic. The helical; Signal-anchor for type II membrane protein transmembrane segment at W10–V30 threads the bilayer. The Lumenal portion of the chain corresponds to R31–K575. 3 disulfide bridges follow: C204–C266, C212–C230, and C218–C222. Residues K206 to L493 enclose the GT23 domain. At S278 the chain carries Phosphoserine. Positions P299–P305 match the SH3-binding motif. Positions R365 to R366 are important for donor substrate binding. C465 and C472 are disulfide-bonded. Residues Q502–E563 form the SH3 domain.

It belongs to the glycosyltransferase 23 family. Tyrosine phosphorylated by PKDCC/VLK.

It localises to the golgi apparatus. It is found in the golgi stack membrane. It catalyses the reaction N(4)-{beta-D-GlcNAc-(1-&gt;2)-alpha-D-Man-(1-&gt;3)-[beta-D-GlcNAc-(1-&gt;2)-alpha-D-Man-(1-&gt;6)]-beta-D-Man-(1-&gt;4)-beta-D-GlcNAc-(1-&gt;4)-beta-D-GlcNAc}-L-asparaginyl-[protein] + GDP-beta-L-fucose = an N(4)-{beta-D-GlcNAc-(1-&gt;2)-alpha-D-Man-(1-&gt;3)-[beta-D-GlcNAc-(1-&gt;2)-alpha-D-Man-(1-&gt;6)]-beta-D-Man-(1-&gt;4)-beta-D-GlcNAc-(1-&gt;4)-[alpha-L-Fuc-(1-&gt;6)]-beta-D-GlcNAc}-L-asparaginyl-[protein] + GDP + H(+). It functions in the pathway protein modification; protein glycosylation. Its function is as follows. Catalyzes the addition of fucose in alpha 1-6 linkage to the first GlcNAc residue, next to the peptide chains in N-glycans. In Canis lupus familiaris (Dog), this protein is Alpha-(1,6)-fucosyltransferase (FUT8).